A 159-amino-acid polypeptide reads, in one-letter code: Glucosamine 6-phosphate N-acetyltransferase (159 aa).

The residue at position 2 (S2) is an N-acetylserine. D-glucosamine 6-phosphate is bound by residues T28, 86–89, and 98–100; these read KIIH and EDI. The 132-residue stretch at 28–159 folds into the N-acetyltransferase domain; the sequence is TTVGTITPES…NAGVEMQIRK (132 aa). Residues 100–102 and 108–113 contribute to the acetyl-CoA site; these read IAV and GQGLGK. D-glucosamine 6-phosphate is bound by residues 129–130 and D134; that span reads YK. 143-145 contributes to the acetyl-CoA binding site; it reads YEK. A D-glucosamine 6-phosphate-binding site is contributed by R158.

Belongs to the acetyltransferase family. GNA1 subfamily. Homodimer.

It catalyses the reaction D-glucosamine 6-phosphate + acetyl-CoA = N-acetyl-D-glucosamine 6-phosphate + CoA + H(+). It participates in nucleotide-sugar biosynthesis; UDP-N-acetyl-alpha-D-glucosamine biosynthesis; N-acetyl-alpha-D-glucosamine 1-phosphate from alpha-D-glucosamine 6-phosphate (route I): step 1/2. In Saccharomyces cerevisiae (strain ATCC 204508 / S288c) (Baker's yeast), this protein is Glucosamine 6-phosphate N-acetyltransferase (GNA1).